We begin with the raw amino-acid sequence, 302 residues long: Sulfate adenylyltransferase subunit 2 (302 aa).

Belongs to the PAPS reductase family. CysD subfamily. In terms of assembly, heterodimer composed of CysD, the smaller subunit, and CysN.

It catalyses the reaction sulfate + ATP + H(+) = adenosine 5'-phosphosulfate + diphosphate. Its pathway is sulfur metabolism; hydrogen sulfide biosynthesis; sulfite from sulfate: step 1/3. Its function is as follows. With CysN forms the ATP sulfurylase (ATPS) that catalyzes the adenylation of sulfate producing adenosine 5'-phosphosulfate (APS) and diphosphate, the first enzymatic step in sulfur assimilation pathway. APS synthesis involves the formation of a high-energy phosphoric-sulfuric acid anhydride bond driven by GTP hydrolysis by CysN coupled to ATP hydrolysis by CysD. In Shigella dysenteriae serotype 1 (strain Sd197), this protein is Sulfate adenylyltransferase subunit 2.